The primary structure comprises 151 residues: Large ribosomal subunit protein bL9 (151 aa).

It belongs to the bacterial ribosomal protein bL9 family.

In terms of biological role, binds to the 23S rRNA. The chain is Large ribosomal subunit protein bL9 from Azoarcus sp. (strain BH72).